The primary structure comprises 237 residues: Leucyl/phenylalanyl-tRNA--protein transferase (237 aa).

It belongs to the L/F-transferase family.

The protein resides in the cytoplasm. It carries out the reaction N-terminal L-lysyl-[protein] + L-leucyl-tRNA(Leu) = N-terminal L-leucyl-L-lysyl-[protein] + tRNA(Leu) + H(+). It catalyses the reaction N-terminal L-arginyl-[protein] + L-leucyl-tRNA(Leu) = N-terminal L-leucyl-L-arginyl-[protein] + tRNA(Leu) + H(+). The enzyme catalyses L-phenylalanyl-tRNA(Phe) + an N-terminal L-alpha-aminoacyl-[protein] = an N-terminal L-phenylalanyl-L-alpha-aminoacyl-[protein] + tRNA(Phe). Functionally, functions in the N-end rule pathway of protein degradation where it conjugates Leu, Phe and, less efficiently, Met from aminoacyl-tRNAs to the N-termini of proteins containing an N-terminal arginine or lysine. In Photobacterium profundum (strain SS9), this protein is Leucyl/phenylalanyl-tRNA--protein transferase.